A 123-amino-acid chain; its full sequence is Ig heavy chain V region H8 (123 aa).

The Ig-like domain maps to Glu-1 to Gly-114.

In Mus musculus (Mouse), this protein is Ig heavy chain V region H8.